A 200-amino-acid polypeptide reads, in one-letter code: Recombination protein RecR (200 aa).

Residues 57-72 form a C4-type zinc finger; sequence CSQCRDFTEEDTCNIC. A Toprim domain is found at 81–176; that stretch reads GLLCVVEMPA…KVSRIAHGIP (96 aa).

This sequence belongs to the RecR family.

Functionally, may play a role in DNA repair. It seems to be involved in an RecBC-independent recombinational process of DNA repair. It may act with RecF and RecO. This Haemophilus influenzae (strain 86-028NP) protein is Recombination protein RecR.